Reading from the N-terminus, the 209-residue chain is Lysine-rich arabinogalactan protein 18 (209 aa).

An N-terminal signal peptide occupies residues 1-21 (MDRNFLLTVTLICIVVAGVGG). The disordered stretch occupies residues 21-185 (GQSPISSPTK…PSADDQSGAA (165 aa)). Over residues 23 to 79 (SPISSPTKSPTTPSAPTTSPTKSPAVTSPTTAPAKTPTASASSPVESPKSPAPVSES) the composition is skewed to low complexity. 2 stretches are compositionally biased toward pro residues: residues 80–95 (SPPPTPVPESSPPVPA) and 103–119 (SSPPVPAPVADSPPAPV). The segment covering 132-145 (SKHKKTTKKSKKHQ) has biased composition (basic residues). A compositionally biased stretch (pro residues) spans 149 to 164 (APAPELLGPPAPPTES). A lipid anchor (GPI-anchor amidated glycine) is attached at Gly183. A propeptide spans 184-209 (AASTRVLRNVAVGAVATAWAVLVMAF) (removed in mature form).

This sequence belongs to the lysine-rich AGP family. In terms of processing, O-glycosylated on the hydroxyproline residues. As to expression, predominantly expressed in flowers, and moderately expressed in roots, stems and young leaves.

Its subcellular location is the cell membrane. Its function is as follows. Proteoglycan that seems to be implicated in diverse developmental roles such as differentiation, cell-cell recognition, embryogenesis and programmed cell death. In Arabidopsis thaliana (Mouse-ear cress), this protein is Lysine-rich arabinogalactan protein 18 (AGP18).